A 449-amino-acid chain; its full sequence is Biotin carboxylase (449 aa).

The region spanning 4–448 (MIEKVLIANR…NIHYLEKMLG (445 aa)) is the Biotin carboxylation domain. ATP is bound by residues Lys-119, Lys-162, 168-169 (GG), 204-207 (EKYL), His-212, and His-239. The region spanning 123–320 (IAAMKAAGVP…IVKEQILIAA (198 aa)) is the ATP-grasp domain. A hydrogencarbonate-binding site is contributed by Lys-241. Positions 279 and 291 each coordinate ATP. Mg(2+) contacts are provided by Glu-279, Glu-291, and Asn-293. The Mn(2+) site is built by Glu-279, Glu-291, and Asn-293. The hydrogencarbonate site is built by Arg-295, Val-298, and Arg-341. Arg-295 is a catalytic residue. Arg-341 is a binding site for biotin.

Acetyl-CoA carboxylase is a heterohexamer of biotin carboxyl carrier protein, biotin carboxylase and the two subunits of carboxyl transferase in a 2:2 complex. Requires Mg(2+) as cofactor. It depends on Mn(2+) as a cofactor.

It catalyses the reaction N(6)-biotinyl-L-lysyl-[protein] + hydrogencarbonate + ATP = N(6)-carboxybiotinyl-L-lysyl-[protein] + ADP + phosphate + H(+). The protein operates within lipid metabolism; malonyl-CoA biosynthesis; malonyl-CoA from acetyl-CoA: step 1/1. Functionally, this protein is a component of the acetyl coenzyme A carboxylase complex; first, biotin carboxylase catalyzes the carboxylation of the carrier protein and then the transcarboxylase transfers the carboxyl group to form malonyl-CoA. This Allochromatium vinosum (strain ATCC 17899 / DSM 180 / NBRC 103801 / NCIMB 10441 / D) (Chromatium vinosum) protein is Biotin carboxylase (accC).